A 486-amino-acid chain; its full sequence is Cobyric acid synthase (486 aa).

One can recognise a GATase cobBQ-type domain in the interval 250 to 438; the sequence is AFRIVVPVPP…LHGMFDTPSA (189 aa). Residue Cys-331 is the Nucleophile of the active site. His-430 is an active-site residue.

Belongs to the CobB/CobQ family. CobQ subfamily.

It functions in the pathway cofactor biosynthesis; adenosylcobalamin biosynthesis. Catalyzes amidations at positions B, D, E, and G on adenosylcobyrinic A,C-diamide. NH(2) groups are provided by glutamine, and one molecule of ATP is hydrogenolyzed for each amidation. The protein is Cobyric acid synthase of Herminiimonas arsenicoxydans.